The following is a 455-amino-acid chain: GTPase Der (455 aa).

EngA-type G domains follow at residues 4 to 169 and 178 to 353; these read PVVA…PPKD and IQLS…EQHR. Residues 10 to 17, 57 to 61, 120 to 123, 184 to 191, 231 to 235, and 296 to 299 contribute to the GTP site; these read GRPNVGKS, DTGGL, NKCE, DTAGI, and NKWD. Residues 354-439 form the KH-like domain; it reads RRVSTSVVNE…PVKLFWRGKQ (86 aa).

The protein belongs to the TRAFAC class TrmE-Era-EngA-EngB-Septin-like GTPase superfamily. EngA (Der) GTPase family. Associates with the 50S ribosomal subunit.

In terms of biological role, GTPase that plays an essential role in the late steps of ribosome biogenesis. This Synechococcus sp. (strain CC9311) protein is GTPase Der.